The following is a 1073-amino-acid chain: MAAAAEAAAEPLVSGLARLLQDTGDLVLDGSSTLTLLTPTLQHLTRVFEQHLGSRNQHRGFVALPSHPAETTAILQAQFLFDMLQKTHSLKLIHVPNCALQSTVKIFPFKSLRHLELRSVPPHCLRGLRFVYSQLESLTCSKCVSTLEEIISACGGDLSCALPWLELQTVNFSYNSITALDDSLQLLNALRVLDLSHNKVQDCEHYLTTLSELEYLNLAYNFLSKVPNLGIFSQSKLLTLILRNNELDSINGVEQLVNLQHLDVAYNLLLEHAQLAPLSTLHYLKKLHLEGNPLWFHQNHRSATLVHVSPRAASSNFLLDGEPLSSSDLMHLPKLVPSVSQSIHTSTSEKTILDRNALDSSCAADFSDSQSPAENVAVRLPRKKGKGKVKVRRASISEPSDTEHESQALPFSAGLVLQHQKEMERMDSFRDRFGVDWLQYKRLEEHNQVSVICRSRSADETTGRPAAVDLQSESFDPKQVKPRLSPKESSPAFHNAGAEEEPEVQPGEPPGGEQREEEADELMLGEEEDEKPEVDLCQPVLVSQIEGEGDPESDWIFLRVTARHVIEVELKAARVLHKLELKCLQKIETSEMTWKRMDLERVFPVLTLHFTYIRKDRQKRKYVVLDDCPEQCLQCVLEVLSPVVEENWRNQDQEKESLRLQCLKCKHEFLQSLAPWQQGPYPAETGDTKNLETLVALNQDASAAGEPIACPSCSSDHVVILPSEVSSSTPVPPSHDGTSEDLSDSALEGGSQQEGPEEVPALPRESGKFYIGGEDSSEMDTSNSTRTPELSGEHDSTIQSSSHSTDGGYGKKEQGMKSQYLSLSHRDTNGGSLMGSYRYSASRGPTSSQLSMTSDSEETWNLSPSANSALNKRDFRSVDHRLKLYLDMEVFEENDEEFQCFLKVTMVKFGRQGEFLSILVASNLRIYVLEVTGVIRGQPADWLKKDDSHYLSDISHLEVGLCHQSLRMEFENPKASYNLLIRSQSCCDQFLQTLTYLMQELPSKHRSKVKEIPTVEMNPQHWLWPLLDSKNTDSAAAGGTCFFYLLAYLIQEYSAPNWTQFKLRPCCQIDRTN.

LRR repeat units follow at residues 166–187, 189–210, 212–233, 236–257, 258–279, and 283–304; these read ELQT…LQLL, ALRV…LTTL, ELEY…GIFS, KLLT…EQLV, NLQH…APLS, and YLKK…RSAT. 4 disordered regions span residues 389–409, 455–533, 724–817, and 834–859; these read VKVR…SQAL, SRSA…EKPE, EVSS…QGMK, and MGSY…SEET. Over residues 515 to 532 the composition is skewed to acidic residues; that stretch reads REEEADELMLGEEEDEKP. 2 stretches are compositionally biased toward polar residues: residues 779-788 and 843-859; these read MDTSNSTRTP and RGPT…SEET.

The protein belongs to the STK11IP family.

It is found in the cytoplasm. The sequence is that of Serine/threonine-protein kinase 11-interacting protein (STK11IP) from Gallus gallus (Chicken).